We begin with the raw amino-acid sequence, 355 residues long: Peptide chain release factor 1 (355 aa).

Gln233 is modified (N5-methylglutamine). Residues 282 to 293 (RKKEQARADSRR) are compositionally biased toward basic and acidic residues. A disordered region spans residues 282–305 (RKKEQARADSRRGQVGSGDRSERI).

This sequence belongs to the prokaryotic/mitochondrial release factor family. In terms of processing, methylated by PrmC. Methylation increases the termination efficiency of RF1.

The protein localises to the cytoplasm. Peptide chain release factor 1 directs the termination of translation in response to the peptide chain termination codons UAG and UAA. This chain is Peptide chain release factor 1, found in Rickettsia rickettsii (strain Iowa).